A 187-amino-acid polypeptide reads, in one-letter code: Ribosome-recycling factor (187 aa).

The protein belongs to the RRF family.

It localises to the cytoplasm. In terms of biological role, responsible for the release of ribosomes from messenger RNA at the termination of protein biosynthesis. May increase the efficiency of translation by recycling ribosomes from one round of translation to another. This Orientia tsutsugamushi (strain Boryong) (Rickettsia tsutsugamushi) protein is Ribosome-recycling factor.